The primary structure comprises 388 residues: Processive diacylglycerol beta-glucosyltransferase (388 aa).

Belongs to the glycosyltransferase 28 family. UgtP subfamily.

The protein localises to the cell membrane. The catalysed reaction is a 1,2-diacyl-3-O-(beta-D-glucopyranosyl)-sn-glycerol + UDP-alpha-D-glucose = a 1,2-diacyl-3-O-(beta-D-Glc-(1-&gt;6)-beta-D-Glc)-sn-glycerol + UDP + H(+). It carries out the reaction a 1,2-diacyl-3-O-(beta-D-Glc-(1-&gt;6)-beta-D-Glc)-sn-glycerol + UDP-alpha-D-glucose = a 1,2-diacyl-3-O-(beta-D-Glc-(1-&gt;6)-beta-D-Glc-(1-&gt;6)-beta-D-Glc)-sn-glycerol + UDP + H(+). It catalyses the reaction a 1,2-diacyl-sn-glycerol + UDP-alpha-D-glucose = a 1,2-diacyl-3-O-(beta-D-glucopyranosyl)-sn-glycerol + UDP + H(+). It functions in the pathway glycolipid metabolism; diglucosyl-diacylglycerol biosynthesis. Functionally, processive glucosyltransferase involved in the biosynthesis of both the bilayer- and non-bilayer-forming membrane glucolipids. Is able to successively transfer up to three glucosyl residues to diacylglycerol (DAG), thereby catalyzing the formation of beta-monoglucosyl-DAG (3-O-(beta-D-glucopyranosyl)-1,2-diacyl-sn-glycerol), beta-diglucosyl-DAG (3-O-(beta-D-glucopyranosyl-beta-(1-&gt;6)-D-glucopyranosyl)-1,2-diacyl-sn-glycerol) and beta-triglucosyl-DAG (3-O-(beta-D-glucopyranosyl-beta-(1-&gt;6)-D-glucopyranosyl-beta-(1-&gt;6)-D-glucopyranosyl)-1,2-diacyl-sn-glycerol). Beta-diglucosyl-DAG is the predominant glycolipid found in Bacillales and is also used as a membrane anchor for lipoteichoic acid (LTA). This Bacillus cereus (strain G9842) protein is Processive diacylglycerol beta-glucosyltransferase.